The chain runs to 859 residues: DNA mismatch repair protein MutS (859 aa).

ATP is bound at residue 617–624; it reads GPNMGGKS.

The protein belongs to the DNA mismatch repair MutS family.

This protein is involved in the repair of mismatches in DNA. It is possible that it carries out the mismatch recognition step. This protein has a weak ATPase activity. In Stutzerimonas stutzeri (strain A1501) (Pseudomonas stutzeri), this protein is DNA mismatch repair protein MutS.